A 389-amino-acid chain; its full sequence is MFIVMTIVFFLVNSTGQTPLSATSSKDLEAVKTQLDAFGFNDPLIVRYGRYWQTLFSGSLGTYYSSPNQTIDQIVFGRVPNTLYVVLISFFIGSLLGIIFGMISGLFRGKLIDAVINVLVVLFVSIPSFVVGLGLLKAAGLFRLPPRFINFDDANFNFGNFLLASIIPILSLVFYTSAAFTYRVRNEVVEVMNQDYIKTARSKGLSTFAVALYHIFRNSIIPSVPLFVFGISGAFSGGFIIESLFGVQGVSRILIDSVQSNETNLVMFNIMFIQGIPLLASVFIELIYVLVDPRIRIASAGGVSLWTKLKFVYLRQAWLRKWRRINHTNSHNVLFNSPQHRQLLELKAIDYKHNTISLTEQQKTTLKIEPTANFVLLGTKCLKIITIHG.

A run of 6 helical transmembrane segments spans residues 1 to 21, 83 to 103, 115 to 135, 161 to 181, 220 to 240, and 270 to 290; these read MFIV…TPLS, LYVV…FGMI, VINV…GLGL, FLLA…AAFT, IIPS…GGFI, and IMFI…IYVL. The region spanning 79-289 is the ABC transmembrane type-1 domain; that stretch reads VPNTLYVVLI…ASVFIELIYV (211 aa).

The protein belongs to the binding-protein-dependent transport system permease family. OppBC subfamily. The complex is composed of two ATP-binding proteins (OppD and OppF), two transmembrane proteins (OppB and OppC) and a solute-binding protein (OppA).

The protein resides in the cell membrane. Part of the ABC transporter complex OppABCDF involved in the uptake of oligopeptides. Probably responsible for the translocation of the substrate across the membrane. The polypeptide is Oligopeptide transport system permease protein OppB (oppB) (Mycoplasma pneumoniae (strain ATCC 29342 / M129 / Subtype 1) (Mycoplasmoides pneumoniae)).